A 199-amino-acid polypeptide reads, in one-letter code: NADH-quinone oxidoreductase subunit C (199 aa).

It belongs to the complex I 30 kDa subunit family. NDH-1 is composed of 14 different subunits. Subunits NuoB, C, D, E, F, and G constitute the peripheral sector of the complex.

Its subcellular location is the cell inner membrane. It carries out the reaction a quinone + NADH + 5 H(+)(in) = a quinol + NAD(+) + 4 H(+)(out). In terms of biological role, NDH-1 shuttles electrons from NADH, via FMN and iron-sulfur (Fe-S) centers, to quinones in the respiratory chain. The immediate electron acceptor for the enzyme in this species is believed to be ubiquinone. Couples the redox reaction to proton translocation (for every two electrons transferred, four hydrogen ions are translocated across the cytoplasmic membrane), and thus conserves the redox energy in a proton gradient. This is NADH-quinone oxidoreductase subunit C from Cupriavidus taiwanensis (strain DSM 17343 / BCRC 17206 / CCUG 44338 / CIP 107171 / LMG 19424 / R1) (Ralstonia taiwanensis (strain LMG 19424)).